The following is a 394-amino-acid chain: MKRSPEDIQSEFDKEGASRSPIQIEDIVIGANAKEELLRFLQKKCWNHPVIVCDRNTYEAAGRLLADELRAGGIKASKVIIPEHEAGAAAADERTLVYTLINLAEETDVIIAAGAGTIHDITRFAAYQRGLPFISFPTAPSVDGFTSAGAPLILNGIKTTIQTKAPIALFADTNVLKEAPRSMTAAGFGDMLGKITSLADWEISRRLAGEPYSEAGAKLVKDALWQCIDHRAAIAMGTEAGIQILMEALIVSGLVMLALDHSRPASGGEHHISHWIEMEMLKAKQPPILHGAKVGCACAVLSDTYKELACHEKLAELPPHFREAIQSAYEGLPDGKTIAGWLASAGGPACFDEIGVKQDLVSDALKHAHTLRDRYTGLTIINENAALFAHHLHQ.

Residues Asp54, Gly116–Asp120, and Thr138–Ser141 each bind NAD(+). Asp143 provides a ligand contact to substrate. Ser147 serves as a coordination point for NAD(+). Asp190 provides a ligand contact to substrate. Ni(2+)-binding residues include Asp190 and His270. His274 provides a ligand contact to substrate. Residue His290 participates in Ni(2+) binding.

This sequence belongs to the glycerol-1-phosphate dehydrogenase family. Homodimer. It depends on Ni(2+) as a cofactor.

Its subcellular location is the cytoplasm. The catalysed reaction is sn-glycerol 1-phosphate + NAD(+) = dihydroxyacetone phosphate + NADH + H(+). It catalyses the reaction sn-glycerol 1-phosphate + NADP(+) = dihydroxyacetone phosphate + NADPH + H(+). Functionally, catalyzes the NAD(P)H-dependent reduction of dihydroxyacetonephosphate (DHAP or glycerone phosphate) to glycerol 1-phosphate (G1P). The G1P thus generated is probably used for the synthesis of phosphoglycerolipids in Gram-positive bacterial species. The polypeptide is Glycerol-1-phosphate dehydrogenase [NAD(P)+] (Bacillus velezensis (strain DSM 23117 / BGSC 10A6 / LMG 26770 / FZB42) (Bacillus amyloliquefaciens subsp. plantarum)).